Consider the following 307-residue polypeptide: Small ribosomal subunit protein uS2 (307 aa).

Residues 256–307 (GGEAEQAAVDATGGAATEETPAAESTGAASEAAAVSEAAEPATEQPAADAEA) are disordered. Positions 259–307 (AEQAAVDATGGAATEETPAAESTGAASEAAAVSEAAEPATEQPAADAEA) are enriched in low complexity.

It belongs to the universal ribosomal protein uS2 family.

This chain is Small ribosomal subunit protein uS2, found in Nocardioides sp. (strain ATCC BAA-499 / JS614).